Consider the following 231-residue polypeptide: Phosphoglycolate phosphatase, plasmid (231 aa).

Asp-14 serves as the catalytic Nucleophile. 3 residues coordinate Mg(2+): Asp-14, Asp-16, and Asp-175.

The protein belongs to the HAD-like hydrolase superfamily. CbbY/CbbZ/Gph/YieH family. As to quaternary structure, homotrimer. Mg(2+) serves as cofactor.

It catalyses the reaction 2-phosphoglycolate + H2O = glycolate + phosphate. It functions in the pathway organic acid metabolism; glycolate biosynthesis; glycolate from 2-phosphoglycolate: step 1/1. In terms of biological role, specifically catalyzes the dephosphorylation of 2-phosphoglycolate. Is involved in the dissimilation of the intracellular 2-phosphoglycolate formed during the DNA repair of 3'-phosphoglycolate ends, a major class of DNA lesions induced by oxidative stress. The protein is Phosphoglycolate phosphatase, plasmid (cbbZP) of Cupriavidus necator (strain ATCC 17699 / DSM 428 / KCTC 22496 / NCIMB 10442 / H16 / Stanier 337) (Ralstonia eutropha).